We begin with the raw amino-acid sequence, 481 residues long: 3-isopropylmalate dehydratase large subunit (481 aa).

The [4Fe-4S] cluster site is built by Cys-357, Cys-417, and Cys-420. Positions 429-441 (SPGQRCASTSNRN) are enriched in polar residues. The segment at 429–451 (SPGQRCASTSNRNFEGRQGKGGR) is disordered.

The protein belongs to the aconitase/IPM isomerase family. LeuC type 1 subfamily. In terms of assembly, heterodimer of LeuC and LeuD. [4Fe-4S] cluster serves as cofactor.

The enzyme catalyses (2R,3S)-3-isopropylmalate = (2S)-2-isopropylmalate. The protein operates within amino-acid biosynthesis; L-leucine biosynthesis; L-leucine from 3-methyl-2-oxobutanoate: step 2/4. Its function is as follows. Catalyzes the isomerization between 2-isopropylmalate and 3-isopropylmalate, via the formation of 2-isopropylmaleate. This chain is 3-isopropylmalate dehydratase large subunit, found in Mycobacterium sp. (strain JLS).